The chain runs to 80 residues: Sulfur carrier protein TusA (80 aa).

Cysteine 17 functions as the Cysteine persulfide intermediate in the catalytic mechanism.

It belongs to the sulfur carrier protein TusA family.

The protein resides in the cytoplasm. Functionally, sulfur carrier protein which probably makes part of a sulfur-relay system. This Pseudomonas putida (strain ATCC 47054 / DSM 6125 / CFBP 8728 / NCIMB 11950 / KT2440) protein is Sulfur carrier protein TusA.